A 455-amino-acid polypeptide reads, in one-letter code: Proline--tRNA ligase (455 aa).

L-proline contacts are provided by Thr101, Glu103, and Arg132. Arg132, Glu134, Gln216, and Thr219 together coordinate ATP. Position 221 (His221) interacts with L-proline. Residues Ser253 and Arg255 each coordinate ATP. The interaction with tRNA stretch occupies residues 329 to 359; sequence EIKGVPLRIEVGPKDIENKKITLFRRDTMEK.

Belongs to the class-II aminoacyl-tRNA synthetase family. ProS type 3 subfamily. In terms of assembly, homodimer. The dimer is functionally asymmetric: only one of the two active sites at a time is able to form prolyl-adenylate, and only one tRNA molecule binds per dimer.

The protein resides in the cytoplasm. It catalyses the reaction tRNA(Pro) + L-proline + ATP = L-prolyl-tRNA(Pro) + AMP + diphosphate. With respect to regulation, inhibited by high concentrations of prolinamide. Functionally, catalyzes the attachment of proline to tRNA(Pro) in a two-step reaction: proline is first activated by ATP to form Pro-AMP and then transferred to the acceptor end of tRNA(Pro). Can inadvertently accommodate and process non-cognate amino acids such as cysteine and alanine. This Methanocaldococcus jannaschii (strain ATCC 43067 / DSM 2661 / JAL-1 / JCM 10045 / NBRC 100440) (Methanococcus jannaschii) protein is Proline--tRNA ligase (proS).